Here is a 387-residue protein sequence, read N- to C-terminus: Probable inactive shikimate kinase like 2, chloroplastic (387 aa).

The transit peptide at 1 to 71 (MAAFASGLAI…FNSFSCNCLS (71 aa)) directs the protein to the chloroplast. The tract at residues 368 to 387 (NIKPPGWDPSSDTGPHPQFT) is disordered.

It belongs to the shikimate kinase family.

Its subcellular location is the plastid. It is found in the chloroplast. In Arabidopsis thaliana (Mouse-ear cress), this protein is Probable inactive shikimate kinase like 2, chloroplastic (SKL2).